The chain runs to 222 residues: Deoxyribose-phosphate aldolase (222 aa).

The active-site Proton donor/acceptor is aspartate 90. Lysine 152 functions as the Schiff-base intermediate with acetaldehyde in the catalytic mechanism. Lysine 181 serves as the catalytic Proton donor/acceptor.

This sequence belongs to the DeoC/FbaB aldolase family. DeoC type 1 subfamily.

Its subcellular location is the cytoplasm. The enzyme catalyses 2-deoxy-D-ribose 5-phosphate = D-glyceraldehyde 3-phosphate + acetaldehyde. Its pathway is carbohydrate degradation; 2-deoxy-D-ribose 1-phosphate degradation; D-glyceraldehyde 3-phosphate and acetaldehyde from 2-deoxy-alpha-D-ribose 1-phosphate: step 2/2. Its function is as follows. Catalyzes a reversible aldol reaction between acetaldehyde and D-glyceraldehyde 3-phosphate to generate 2-deoxy-D-ribose 5-phosphate. This Pectobacterium carotovorum subsp. carotovorum (strain PC1) protein is Deoxyribose-phosphate aldolase.